A 712-amino-acid chain; its full sequence is Serrate RNA effector molecule homolog (712 aa).

Disordered stretches follow at residues 1-80, 214-256, and 620-712; these read MVDS…DSIY, ADIK…TEKS, and QRPV…DDIP. 2 stretches are compositionally biased toward basic and acidic residues: residues 8–26 and 34–54; these read GDRRRDKFARERRDEDYRR and YDNKRPGGRRDDYQVKRSRGD. A compositionally biased stretch (polar residues) spans 65-79; that stretch reads RSGNGSDLPTESDSI. Residues 214-236 show a composition bias toward basic and acidic residues; sequence ADIKKDENGNGTEQPKEEPEVKQ. Residues 240–251 show a composition bias toward acidic residues; the sequence is ATEELEEGAIED. 2 stretches are compositionally biased toward basic and acidic residues: residues 621–637 and 645–655; these read RPVDCEPKQAPRDDHRG and GYGRERDDDRG. Gly residues predominate over residues 656-668; sequence PGGGGRNSFGGGG.

It belongs to the ARS2 family.

The protein localises to the nucleus. Functionally, acts as a mediator between the cap-binding complex (CBC) and the primary microRNAs (miRNAs) processing machinery. Contributes to the stability and delivery of capped primary miRNA transcripts to the primary miRNA processing complex, thereby playing a role in RNA-mediated gene silencing (RNAi) by miRNAs. This chain is Serrate RNA effector molecule homolog, found in Caenorhabditis elegans.